The primary structure comprises 123 residues: Small ribosomal subunit protein uS12 (123 aa).

D89 bears the 3-methylthioaspartic acid mark.

It belongs to the universal ribosomal protein uS12 family. Part of the 30S ribosomal subunit. Contacts proteins S8 and S17. May interact with IF1 in the 30S initiation complex.

In terms of biological role, with S4 and S5 plays an important role in translational accuracy. Functionally, interacts with and stabilizes bases of the 16S rRNA that are involved in tRNA selection in the A site and with the mRNA backbone. Located at the interface of the 30S and 50S subunits, it traverses the body of the 30S subunit contacting proteins on the other side and probably holding the rRNA structure together. The combined cluster of proteins S8, S12 and S17 appears to hold together the shoulder and platform of the 30S subunit. The protein is Small ribosomal subunit protein uS12 of Gluconacetobacter diazotrophicus (strain ATCC 49037 / DSM 5601 / CCUG 37298 / CIP 103539 / LMG 7603 / PAl5).